Consider the following 251-residue polypeptide: 5'-nucleotidase SurE (251 aa).

A divalent metal cation is bound by residues Asp-8, Asp-9, Ser-40, and Asn-95.

Belongs to the SurE nucleotidase family. It depends on a divalent metal cation as a cofactor.

Its subcellular location is the cytoplasm. The catalysed reaction is a ribonucleoside 5'-phosphate + H2O = a ribonucleoside + phosphate. Functionally, nucleotidase that shows phosphatase activity on nucleoside 5'-monophosphates. The polypeptide is 5'-nucleotidase SurE (Desulfitobacterium hafniense (strain DSM 10664 / DCB-2)).